We begin with the raw amino-acid sequence, 68 residues long: Disintegrin EMF10B (68 aa).

The region spanning 1 to 68 (ELLQNSGNPC…SDCPRNPVFK (68 aa)) is the Disintegrin domain. 4 cysteine pairs are disulfide-bonded: cysteine 10-cysteine 33, cysteine 24-cysteine 30, cysteine 29-cysteine 54, and cysteine 42-cysteine 61. The Cell attachment site; atypical (MGD) motif lies at 46–48 (MGD).

This sequence belongs to the venom metalloproteinase (M12B) family. P-II subfamily. P-IIe sub-subfamily. As to quaternary structure, heterodimer with EMF10A; disulfide-linked. As to expression, expressed by the venom gland.

It is found in the secreted. Functionally, extremely potent and selective inhibitor of integrin alpha-5/beta-1 (ITGA5/ITGB1). Partially inhibits adhesion of cells expressing alpha-IIb/beta-3 (ITGA2B/ITGB3), alpha-V/beta-3 (ITGAV/ITGB3), and alpha-4/beta-1 (ITGA4/ITGB1) to appropriate ligands only at concentration higher than 500 nM. Weakly inhibits ADP-induced platelet aggregation. The chain is Disintegrin EMF10B from Eristicophis macmahoni (Leaf-nosed viper).